The sequence spans 390 residues: Caveolae-associated protein 1 (390 aa).

Met-1 bears the N-acetylmethionine mark. The disordered stretch occupies residues 1-40; it reads MEDPTLYIVERPLPGYPDAEAPEPSSAGAQAAEEPSGAGS. Residues 1–98 form a required for homotrimerization and for interaction with CAVIN2 and CAVIN3 region; sequence MEDPTLYIVE…IQGELSKLGK (98 aa). Low complexity predominate over residues 22-40; the sequence is PEPSSAGAQAAEEPSGAGS. Phosphoserine is present on residues Ser-36, Ser-40, and Ser-46. The segment at 52–62 is nuclear export signal; it reads VLVLSLLDKII. The interval 53–75 is leucine-zipper 1; it reads LVLSLLDKIIGAVDQIQLTQAQL. Lys-116 is covalently cross-linked (Glycyl lysine isopeptide (Lys-Gly) (interchain with G-Cter in SUMO2)). The residue at position 118 (Ser-118) is a Phosphoserine. Residue Lys-122 forms a Glycyl lysine isopeptide (Lys-Gly) (interchain with G-Cter in SUMO2) linkage. Residues 136 to 152 are nuclear localization signal; that stretch reads KKLEVNEAELLRRRNFK. A Phosphotyrosine modification is found at Tyr-156. Lys-161 participates in a covalent cross-link: Glycyl lysine isopeptide (Lys-Gly) (interchain with G-Cter in SUMO1); alternate. A Glycyl lysine isopeptide (Lys-Gly) (interchain with G-Cter in SUMO2); alternate cross-link involves residue Lys-161. A Glycyl lysine isopeptide (Lys-Gly) (interchain with G-Cter in SUMO2) cross-link involves residue Lys-165. Residues 166–186 are leucine-zipper 2; sequence LSISKSLKESEALPEKEGEEL. A phosphoserine mark is found at Ser-167 and Ser-169. Lys-170 participates in a covalent cross-link: Glycyl lysine isopeptide (Lys-Gly) (interchain with G-Cter in SUMO2). Residues Ser-171 and Ser-175 each carry the phosphoserine modification. A compositionally biased stretch (basic and acidic residues) spans 172 to 181; it reads LKESEALPEK. The disordered stretch occupies residues 172 to 201; the sequence is LKESEALPEKEGEELGEGERPEEDAAALEL. Acidic residues predominate over residues 182–201; that stretch reads EGEELGEGERPEEDAAALEL. Positions 199–282 form a coiled coil; the sequence is LELSSDEAVE…RMNKLGTRLV (84 aa). Ser-202 and Ser-203 each carry phosphoserine. Residues 233-249 are nuclear localization signal; sequence KKAFSKEKMEKTKVRTR. A leucine-zipper 3 region spans residues 257-297; sequence LKTKENLEKTRHTLEKRMNKLGTRLVPAERREKLKTSRDKL. Ser-300 carries the phosphoserine modification. Thr-302 carries the post-translational modification Phosphothreonine. Tyr-308 bears the Phosphotyrosine mark. Residue Lys-326 forms a Glycyl lysine isopeptide (Lys-Gly) (interchain with G-Cter in SUMO2) linkage. The tract at residues 344–366 is disordered; it reads VGADDDEGGAERGEAGDLRRGSS. Over residues 352–365 the composition is skewed to basic and acidic residues; that stretch reads GAERGEAGDLRRGS. Residues Ser-365, Ser-366, Ser-379, Ser-387, and Ser-389 each carry the phosphoserine modification.

This sequence belongs to the CAVIN family. As to quaternary structure, component of the CAVIN complex composed of CAVIN1, CAVIN2, CAVIN3 and CAVIN4. Homotrimer. Interacts with TTF1. Interacts with RNA polymerase I subunit POLR1A/RPA1. Binds the 3' end of pre-rRNA. Interacts with transcription factor ZNF148. Interacts with LIPE in the adipocyte cytoplasm. Interacts with CAV1 and CAVIN3. Interacts with CAVIN2. Interacts with CAVIN4 and CAV3. Post-translationally, phosphorylated. Present in active and inactive forms. Changes in phosphorylation pattern may alter activity. Phosphorylation at Tyr-156 is essential for its functionin the regulation of ribosomal transcriptional activity. In terms of processing, five truncated forms are found in the caveolae. These are thought to be the result of proteolysis and may be phosphorylation-dependent. Monoubiquitinated.

The protein resides in the membrane. Its subcellular location is the caveola. The protein localises to the cell membrane. It localises to the microsome. It is found in the endoplasmic reticulum. The protein resides in the cytoplasm. Its subcellular location is the cytosol. The protein localises to the mitochondrion. It localises to the nucleus. Plays an important role in caveolae formation and organization. Essential for the formation of caveolae in all tissues. Core component of the CAVIN complex which is essential for recruitment of the complex to the caveolae in presence of calveolin-1 (CAV1). Essential for normal oligomerization of CAV1. Promotes ribosomal transcriptional activity in response to metabolic challenges in the adipocytes and plays an important role in the formation of the ribosomal transcriptional loop. Dissociates transcription complexes paused by DNA-bound TTF1, thereby releasing both RNA polymerase I and pre-RNA from the template. The caveolae biogenesis pathway is required for the secretion of proteins such as GASK1A. This Homo sapiens (Human) protein is Caveolae-associated protein 1.